The following is a 349-amino-acid chain: Draxin (349 aa).

A signal peptide spans 1 to 25 (MAASSTFFSPSLFLCVLVLIDITLA). Over residues 40–53 (NHLQNQETWPQQPR) the composition is skewed to polar residues. 3 disordered regions span residues 40 to 63 (NHLQ…HGLA), 119 to 166 (PHAE…LYKK), and 246 to 273 (WPSA…EGEP). Residues 54-63 (SGHHHKHGLA) show a composition bias toward basic residues. A compositionally biased stretch (basic and acidic residues) spans 119–139 (PHAERENQSPGSERGKKQNRE). Basic residues-rich tracts occupy residues 140–155 (QRRH…HRGK) and 249–258 (AKKKEKRRSK). N-linked (GlcNAc...) asparagine glycosylation occurs at Asn264.

The protein belongs to the draxin family.

The protein localises to the secreted. Chemorepulsive axon guidance protein required for the development of spinal cord and forebrain commissures. Acts as a chemorepulsive guidance protein for commissural axons during development. Able to inhibit or repel neurite outgrowth from dorsal spinal cord and cortical explants in vitro. Binds directly to the neurites and growth cones. The protein is Draxin of Gallus gallus (Chicken).